Here is a 276-residue protein sequence, read N- to C-terminus: Putative pyruvate, phosphate dikinase regulatory protein (276 aa).

154–161 contacts ADP; the sequence is GVSRTSKS.

It belongs to the pyruvate, phosphate/water dikinase regulatory protein family. PDRP subfamily.

The catalysed reaction is N(tele)-phospho-L-histidyl/L-threonyl-[pyruvate, phosphate dikinase] + ADP = N(tele)-phospho-L-histidyl/O-phospho-L-threonyl-[pyruvate, phosphate dikinase] + AMP + H(+). The enzyme catalyses N(tele)-phospho-L-histidyl/O-phospho-L-threonyl-[pyruvate, phosphate dikinase] + phosphate + H(+) = N(tele)-phospho-L-histidyl/L-threonyl-[pyruvate, phosphate dikinase] + diphosphate. Its function is as follows. Bifunctional serine/threonine kinase and phosphorylase involved in the regulation of the pyruvate, phosphate dikinase (PPDK) by catalyzing its phosphorylation/dephosphorylation. This chain is Putative pyruvate, phosphate dikinase regulatory protein, found in Wolbachia pipientis wMel.